A 146-amino-acid polypeptide reads, in one-letter code: Hemoglobin subunit beta (146 aa).

Val1 carries the post-translational modification N-acetylvaline. The 145-residue stretch at 2 to 146 (HLTDAEKALV…VATALAHKYH (145 aa)) folds into the Globin domain. Residue Thr12 is modified to Phosphothreonine. Position 44 is a phosphoserine (Ser44). At Lys59 the chain carries N6-acetyllysine. His63 provides a ligand contact to heme b. An N6-acetyllysine modification is found at Lys82. His92 contributes to the heme b binding site. Cys93 bears the S-nitrosocysteine mark. Position 144 is an N6-acetyllysine (Lys144).

It belongs to the globin family. As to quaternary structure, heterotetramer of two alpha chains and two beta chains. As to expression, red blood cells.

Involved in oxygen transport from the lung to the various peripheral tissues. In Peromyscus californicus (California mouse), this protein is Hemoglobin subunit beta.